An 88-amino-acid chain; its full sequence is Acylphosphatase (88 aa).

One can recognise an Acylphosphatase-like domain in the interval 3–88; that stretch reads AARFVVSGVV…VPPTEDFVTG (86 aa). Residues R18 and N36 contribute to the active site.

Belongs to the acylphosphatase family.

The enzyme catalyses an acyl phosphate + H2O = a carboxylate + phosphate + H(+). The polypeptide is Acylphosphatase (acyP) (Xanthomonas oryzae pv. oryzae (strain MAFF 311018)).